Consider the following 427-residue polypeptide: MSRSEALFAQAQKHIPGGVNSPVRAFKSVGGTPLFFKHAEGAYVVDEDDKRYVDYVGSWGPMILGHGHPDVLDSVRKQLEHGLSYGAPTAMETEMADLVCSIVPSMEMVRMVSSGTEATMSAIRLARGYTGRDAIIKFEGCYHGHSDSLLVKAGSGLLTQGVPSSAGVPADFAKHTLTLPFNDIAAVEKTLAEVGQTVACIIVEPVAGNMNCVPPAPGFLEGLREQCDKHGVVLIFDEVMTGFRVSLGGAQGHYGITPDLSTFGKIVGGGMPVGCFGGKREIMGCIAPLGPVYQAGTLSGNPLAMAAGLTTLKLISRPGFHAELTDYTSRMLDGLQQRADAAGVPFVTTQAGAMFGLYFSGADDIVTFEDVMASDAERFKRFFHLMLDGGVYLAPSAFEAGFTSIAHGDKELQITLDAAEKAFAALK.

Lys265 is modified (N6-(pyridoxal phosphate)lysine).

This sequence belongs to the class-III pyridoxal-phosphate-dependent aminotransferase family. HemL subfamily. In terms of assembly, homodimer. Pyridoxal 5'-phosphate serves as cofactor.

Its subcellular location is the cytoplasm. The catalysed reaction is (S)-4-amino-5-oxopentanoate = 5-aminolevulinate. It participates in porphyrin-containing compound metabolism; protoporphyrin-IX biosynthesis; 5-aminolevulinate from L-glutamyl-tRNA(Glu): step 2/2. The polypeptide is Glutamate-1-semialdehyde 2,1-aminomutase (Pseudomonas putida (strain ATCC 700007 / DSM 6899 / JCM 31910 / BCRC 17059 / LMG 24140 / F1)).